A 232-amino-acid chain; its full sequence is MNAGRQLFVRSIRDFSTFVHTPDAERIKLVESGLMLDDQLREAYRIRGSFTDSRYHTWVCFEFIDKTGVSRYVRFRLINADRGPDRGLPRPEFKANGHPSMDAEADDDRAPDFLRKDFIHRVRHSDVRYILQAQLRDTPPPPVGNHELFDPSQPWNEYWFPWVDMFEIRLNEVIDDQAAVSRLEMNPNRSPECIRIPLATSPDDYASLGHARAIVYPGARAARAAVPPPQNN.

Residues 86–95 (RGLPRPEFKA) are compositionally biased toward basic and acidic residues. The segment at 86–107 (RGLPRPEFKANGHPSMDAEADD) is disordered.

This is an uncharacterized protein from Sinorhizobium fredii (strain NBRC 101917 / NGR234).